The chain runs to 173 residues: Small ribosomal subunit protein uS7 (173 aa).

It belongs to the universal ribosomal protein uS7 family. In terms of assembly, part of the 30S ribosomal subunit. Contacts proteins S9 and S11.

Functionally, one of the primary rRNA binding proteins, it binds directly to 16S rRNA where it nucleates assembly of the head domain of the 30S subunit. Is located at the subunit interface close to the decoding center, probably blocks exit of the E-site tRNA. The polypeptide is Small ribosomal subunit protein uS7 (Orientia tsutsugamushi (strain Boryong) (Rickettsia tsutsugamushi)).